We begin with the raw amino-acid sequence, 541 residues long: Zinc finger protein 513 (541 aa).

Residues 1–120 are disordered; it reads MPRRKQSHPQ…ARGERPGPAC (120 aa). The span at 44–55 shows a compositional bias: acidic residues; sequence LEFEEEEEEEEG. 2 positions are modified to phosphoserine: Ser-85 and Ser-96. Over residues 103-115 the composition is skewed to basic and acidic residues; it reads EPARGPGEARGER. 8 C2H2-type zinc fingers span residues 150 to 172, 178 to 200, 206 to 228, 360 to 382, 388 to 410, 416 to 438, 444 to 466, and 472 to 494; these read YSCR…MQTH, FRCG…TRTH, YRCP…QRTH, FACS…MKTH, FRCA…QRVH, YKCP…GRIH, FRCS…MLRH, and FRCA…QKVH. The interval 492–541 is disordered; that stretch reads KVHGHGGAGGPGLSAPEGWAPPHSPPSVLSTRGSAALGATGSRALHTDSP.

Belongs to the krueppel C2H2-type zinc-finger protein family. In terms of assembly, binds DNA. Can associate with the proximal promoter regions of PAX6 and SP4, and their known targets including ARR3, RHO, OPN1MW2 and OPN1SW.

It localises to the nucleus. Functionally, transcriptional regulator that plays a role in retinal development and maintenance. The chain is Zinc finger protein 513 (Znf513) from Rattus norvegicus (Rat).